Consider the following 1382-residue polypeptide: Y' element ATP-dependent helicase protein 1 copy 4 (1382 aa).

One can recognise a Helicase ATP-binding domain in the interval 383–560 (EIYMADTPSV…LQRIGLTGLA (178 aa)). Residue 396 to 403 (APPGYGKT) participates in ATP binding. The Helicase C-terminal domain maps to 617-766 (KLLLALFEIE…EFYGLESKKG (150 aa)). Disordered stretches follow at residues 840 to 864 (ANASTNATTNSSTNATTTASTNVRT) and 880 to 1007 (TTES…DINK). Low complexity predominate over residues 880-983 (TTESTNSSTN…ATTTESTNAS (104 aa)). Positions 984–1007 (AKEDANKDGNAEDNRFHPVTDINK) are enriched in basic and acidic residues.

The protein belongs to the helicase family. Yeast subtelomeric Y' repeat subfamily.

Functionally, catalyzes DNA unwinding and is involved in telomerase-independent telomere maintenance. This Saccharomyces cerevisiae (strain ATCC 204508 / S288c) (Baker's yeast) protein is Y' element ATP-dependent helicase protein 1 copy 4 (YRF1-4).